The primary structure comprises 523 residues: MRAIFRATKRMPPGQRKTAAIVVIGDEILKGTTRDTNSHFLCKRLHKLGVNIKKIAVVGDEISEISREVQSASSAYDYVITSGGVGPTHDDKTYLGLAHAFTDQLHFSDEIRQAVNRFLPTYIDKKKSEGVEEGIEEVVRVVTEKLCTIPKMSQLLWGTQKVDGRVSTFPVVRVANVVALPGVPKFCERAFDELQDQLFPVEERQSMFFDTIYTDLDEFDFSRRLADVAARFEEQNVQIGSYPELKNKFFKTKLTIETESSESMEAVRIALKELLVGHIVYYDSHAWTDTVAKWRAFKKRELVEAKNVDFVRKLEEAEKIVEDIVERYPLDQIALSFNGGKDCTVLLHLLRLKVDEKYGASKAIQGFHIMVEDQFPEATQFIIDAAQFYNIQVLEFPGPLKIGLAGLKKQRPSIIPVLMGSRATDPNGKYMKTPVEWTDSDWPKVLRVCPILNWTYSDVWHMLRGLCVPYCKLYDQGYTSLGGRDNTVKHPALRIVASDGKEHYLPAYKLHNDAEERSNRSNL.

Residues 20–111 (AIVVIGDEIL…TDQLHFSDEI (92 aa)) are molybdenum cofactor biosynthesis protein-like. Residues 332 to 489 (QIALSFNGGK…SLGGRDNTVK (158 aa)) form an FAD synthase region.

This sequence in the N-terminal section; belongs to the MoaB/Mog family. The protein in the C-terminal section; belongs to the PAPS reductase family. FAD1 subfamily. Requires Mg(2+) as cofactor.

It catalyses the reaction FMN + ATP + H(+) = FAD + diphosphate. It participates in cofactor biosynthesis; FAD biosynthesis; FAD from FMN: step 1/1. In terms of biological role, catalyzes the adenylation of flavin mononucleotide (FMN) to form flavin adenine dinucleotide (FAD) coenzyme. This chain is Probable FAD synthase, found in Caenorhabditis briggsae.